We begin with the raw amino-acid sequence, 505 residues long: Deoxyguanosinetriphosphate triphosphohydrolase (505 aa).

Residues 66 to 273 form the HD domain; the sequence is RLTHSMEVQQ…MEAADDISYC (208 aa).

This sequence belongs to the dGTPase family. Type 1 subfamily. In terms of assembly, homotetramer. The cofactor is Mg(2+).

The enzyme catalyses dGTP + H2O = 2'-deoxyguanosine + triphosphate + H(+). In terms of biological role, dGTPase preferentially hydrolyzes dGTP over the other canonical NTPs. The polypeptide is Deoxyguanosinetriphosphate triphosphohydrolase (Serratia proteamaculans (strain 568)).